The chain runs to 171 residues: 3-hydroxydecanoyl-[acyl-carrier-protein] dehydratase (171 aa).

His70 is an active-site residue.

The protein belongs to the thioester dehydratase family. FabA subfamily. In terms of assembly, homodimer.

It is found in the cytoplasm. It carries out the reaction a (3R)-hydroxyacyl-[ACP] = a (2E)-enoyl-[ACP] + H2O. The enzyme catalyses (3R)-hydroxydecanoyl-[ACP] = (2E)-decenoyl-[ACP] + H2O. It catalyses the reaction (2E)-decenoyl-[ACP] = (3Z)-decenoyl-[ACP]. It participates in lipid metabolism; fatty acid biosynthesis. Functionally, necessary for the introduction of cis unsaturation into fatty acids. Catalyzes the dehydration of (3R)-3-hydroxydecanoyl-ACP to E-(2)-decenoyl-ACP and then its isomerization to Z-(3)-decenoyl-ACP. Can catalyze the dehydratase reaction for beta-hydroxyacyl-ACPs with saturated chain lengths up to 16:0, being most active on intermediate chain length. This is 3-hydroxydecanoyl-[acyl-carrier-protein] dehydratase from Stenotrophomonas maltophilia (strain K279a).